Reading from the N-terminus, the 360-residue chain is Bifunctional protein FolD 4, chloroplastic (360 aa).

The transit peptide at 1–51 (MASMMFTDCSSTTTSRLIHLNRSSGTFLLRQCVGQLRLQTTASGRGCCIRS) directs the protein to the chloroplast. Ser52 is modified (N-acetylserine).

This sequence belongs to the tetrahydrofolate dehydrogenase/cyclohydrolase family. Homodimer.

The protein resides in the plastid. The protein localises to the chloroplast. It carries out the reaction (6R)-5,10-methylene-5,6,7,8-tetrahydrofolate + NADP(+) = (6R)-5,10-methenyltetrahydrofolate + NADPH. The enzyme catalyses (6R)-5,10-methenyltetrahydrofolate + H2O = (6R)-10-formyltetrahydrofolate + H(+). It participates in one-carbon metabolism; tetrahydrofolate interconversion. In terms of biological role, catalyzes the oxidation of 5,10-methylenetetrahydrofolate to 5,10-methenyltetrahydrofolate and then the hydrolysis of 5,10-methenyltetrahydrofolate to 10-formyltetrahydrofolate. The chain is Bifunctional protein FolD 4, chloroplastic (FOLD4) from Arabidopsis thaliana (Mouse-ear cress).